The sequence spans 116 residues: Large ribosomal subunit protein uL18 (116 aa).

It belongs to the universal ribosomal protein uL18 family. In terms of assembly, part of the 50S ribosomal subunit; part of the 5S rRNA/L5/L18/L25 subcomplex. Contacts the 5S and 23S rRNAs.

Its function is as follows. This is one of the proteins that bind and probably mediate the attachment of the 5S RNA into the large ribosomal subunit, where it forms part of the central protuberance. The protein is Large ribosomal subunit protein uL18 of Acholeplasma laidlawii (strain PG-8A).